The chain runs to 295 residues: MEVLDKAVNGYIDHLLGPKDPRVRGWLLLDNYVPTILFTALYLFIVWRGPKYMQNRPPVSCRGILVVYNLGLTLLSLYMFYELVTGVWEGGYNFFCQDTNSGGDADTKIVRVLWWYYFSKLIEFMDTFFFILRKNNHQITVLHVYHHASMLNIWWFVMNWVPCGHSYFGATLNSFIHVLMYSYYGLSAIPAMRPYLWWKKYITQCQLTQFVLTMTQTTCAMIWPCKFPMGWLYFQNCYMISLIILFGNFYIKTYNKKTSSRRKEYQNGSASAVNGHTNSFSSLEDNVKQRKQRQD.

7 helical membrane passes run 26 to 46, 64 to 84, 112 to 132, 150 to 170, 175 to 192, 207 to 223, and 227 to 247; these read WLLL…LFIV, ILVV…YELV, VLWW…FFIL, MLNI…YFGA, FIHV…IPAM, LTQF…AMIW, and FPMG…ILFG. A disordered region spans residues 265–295; sequence YQNGSASAVNGHTNSFSSLEDNVKQRKQRQD. The segment covering 266–284 has biased composition (polar residues); it reads QNGSASAVNGHTNSFSSLE. The segment covering 285 to 295 has biased composition (basic and acidic residues); it reads DNVKQRKQRQD.

This sequence belongs to the ELO family. ELOVL5 subfamily.

Its subcellular location is the endoplasmic reticulum membrane. It localises to the cell projection. The protein localises to the dendrite. The enzyme catalyses a very-long-chain acyl-CoA + malonyl-CoA + H(+) = a very-long-chain 3-oxoacyl-CoA + CO2 + CoA. The catalysed reaction is (6Z,9Z,12Z)-octadecatrienoyl-CoA + malonyl-CoA + H(+) = (8Z,11Z,14Z)-3-oxoeicosatrienoyl-CoA + CO2 + CoA. It carries out the reaction (9Z,12Z,15Z)-octadecatrienoyl-CoA + malonyl-CoA + H(+) = (11Z,14Z,17Z)-3-oxoeicosatrienoyl-CoA + CO2 + CoA. It catalyses the reaction (9Z)-hexadecenoyl-CoA + malonyl-CoA + H(+) = 3-oxo-(11Z)-octadecenoyl-CoA + CO2 + CoA. The enzyme catalyses (9Z)-octadecenoyl-CoA + malonyl-CoA + H(+) = 3-oxo-(11Z)-eicosenoyl-CoA + CO2 + CoA. The catalysed reaction is (11Z)-octadecenoyl-CoA + malonyl-CoA + H(+) = 3-oxo-(13Z)-eicosenoyl-CoA + CO2 + CoA. It carries out the reaction (9Z,12Z)-octadecadienoyl-CoA + malonyl-CoA + H(+) = (11Z,14Z)-3-oxoicosa-11,14-dienoyl-CoA + CO2 + CoA. It catalyses the reaction (6Z,9Z,12Z,15Z)-octadecatetraenoyl-CoA + malonyl-CoA + H(+) = (8Z,11Z,14Z,17Z)-3-oxoicosatetraenoyl-CoA + CO2 + CoA. The enzyme catalyses (5Z,8Z,11Z,14Z)-eicosatetraenoyl-CoA + malonyl-CoA + H(+) = (7Z,10Z,13Z,16Z)-3-oxodocosatetraenoyl-CoA + CO2 + CoA. The catalysed reaction is (5Z,8Z,11Z,14Z,17Z)-eicosapentaenoyl-CoA + malonyl-CoA + H(+) = 3-oxo-(7Z,10Z,13Z,16Z,19Z)-docosapentaenoyl-CoA + CO2 + CoA. The protein operates within lipid metabolism; polyunsaturated fatty acid biosynthesis. In terms of biological role, catalyzes the first and rate-limiting reaction of the four reactions that constitute the long-chain fatty acids elongation cycle. This endoplasmic reticulum-bound enzymatic process allows the addition of 2 carbons to the chain of long- and very long-chain fatty acids (VLCFAs) per cycle. Condensing enzyme that acts specifically toward polyunsaturated acyl-CoA with the higher activity toward C18:3(n-6) acyl-CoA. May participate in the production of monounsaturated and of polyunsaturated VLCFAs of different chain lengths that are involved in multiple biological processes as precursors of membrane lipids and lipid mediators. In conditions where the essential linoleic and alpha linoleic fatty acids are lacking it is also involved in the synthesis of Mead acid from oleic acid. In Xenopus tropicalis (Western clawed frog), this protein is Very long chain fatty acid elongase 5.